Consider the following 467-residue polypeptide: ESX-4 secretion system protein eccD4 (467 aa).

Helical transmembrane passes span 122–142 (GALAASCITAGGGLMLVRNAL), 152–172 (ATAGVVAAAGLAALLFAVIAC), 186–206 (VIATIFGAVAGLLAVPGVPGV), 209–229 (VLVAAMAAAATSVLAMRITGC), 241–261 (AVVVAAATLVGAITAAPVPAI), 264–284 (LATLASFGLLEVSARMAVLLA), 319–339 (LTSLLAAFAASATIGAIGTAV), 344–364 (IHRSSMGGIALAAVTGALLLL), 374–394 (SLVFAICGITTVATAFTVAAD), 401–421 (PWIAALTAMLAAVAMFLGFVA), and 439–459 (CLALIAMVPLTAWLCGAYSAV).

It belongs to the EccD/Snm4 family. In terms of assembly, part of the ESX-4 / type VII secretion system (T7SS), which is composed of cytosolic and membrane components.

It is found in the cell membrane. This chain is ESX-4 secretion system protein eccD4 (eccD4), found in Mycobacterium tuberculosis (strain CDC 1551 / Oshkosh).